A 194-amino-acid chain; its full sequence is MEDKLKKAKIIFVVGGPGSGKGTQCEKIVQKYGYTHLSTGDLLRAEVSSGSSRGKMLSSIMEKGELVPLETVLDMLRDAMLAKVDSSNGFLIDGYPREVKQGEEFERKIAQPTLLLYVDAGPETMTQRLLKRGETSGRVDDNEETIKKRLETYYKATEPVISFYDKRGIVRKVNAEGSVDTVFSQVCTYLDSLK.

At Met1 the chain carries N-acetylmethionine. 18–23 (GSGKGT) is a binding site for ATP. A Phosphoserine modification is found at Ser38. The tract at residues 38–67 (STGDLLRAEVSSGSSRGKMLSSIMEKGELV) is NMP. AMP-binding positions include Thr39, Arg44, 65–67 (ELV), 94–97 (GYPR), and Gln101. The segment at 131-141 (KRGETSGRVDD) is LID. Arg132 is a binding site for ATP. Positions 138 and 149 each coordinate AMP. Residue Gly177 participates in ATP binding.

It belongs to the adenylate kinase family. AK1 subfamily. In terms of assembly, monomer. Mg(2+) is required as a cofactor.

It is found in the cytoplasm. It catalyses the reaction a ribonucleoside 5'-phosphate + ATP = a ribonucleoside 5'-diphosphate + ADP. The catalysed reaction is AMP + ATP = 2 ADP. The enzyme catalyses dAMP + ATP = dADP + ADP. It carries out the reaction dATP + AMP = dADP + ADP. It catalyses the reaction dAMP + dATP = 2 dADP. The catalysed reaction is a 2'-deoxyribonucleoside 5'-diphosphate + ATP = a 2'-deoxyribonucleoside 5'-triphosphate + ADP. The enzyme catalyses a ribonucleoside 5'-diphosphate + ATP = a ribonucleoside 5'-triphosphate + ADP. It carries out the reaction CDP + GTP = CTP + GDP. It catalyses the reaction GDP + ATP = GTP + ADP. The catalysed reaction is UDP + ATP = UTP + ADP. The enzyme catalyses GTP + UDP = UTP + GDP. It carries out the reaction dTDP + GTP = dTTP + GDP. It catalyses the reaction dCDP + GTP = dCTP + GDP. The catalysed reaction is dGDP + ATP = dGTP + ADP. The enzyme catalyses dADP + GTP = dATP + GDP. It carries out the reaction thiamine diphosphate + ADP = thiamine triphosphate + AMP. Its function is as follows. Catalyzes the reversible transfer of the terminal phosphate group between ATP and AMP. Also displays broad nucleoside diphosphate kinase activity. Plays an important role in cellular energy homeostasis and in adenine nucleotide metabolism. Also catalyzes at a very low rate the synthesis of thiamine triphosphate (ThTP) from thiamine diphosphate (ThDP) and ADP. In Rattus norvegicus (Rat), this protein is Adenylate kinase isoenzyme 1 (Ak1).